Consider the following 269-residue polypeptide: uncharacterized protein (269 aa).

One can recognise an HTH gntR-type domain in the interval 5 to 73 (APKWRELADR…RGHGTVVRRK (69 aa)). The H-T-H motif DNA-binding region spans 33 to 52 (IRDLVEAGEGSKETVHRAYK).

Its function is as follows. The imp locus inhibits the extrachromosomal maintenance of the Streptomyces plasmid SLP1. This is an uncharacterized protein from Streptomyces coelicolor (strain ATCC BAA-471 / A3(2) / M145).